Here is a 313-residue protein sequence, read N- to C-terminus: Fucose-specific lectin (313 aa).

6 tandem repeats follow at residues 5 to 57 (FLYT…VIGE), 58 to 109 (AKLF…VGVK), 110 to 162 (VGSN…SFGS), 163 to 208 (TVPG…FSAS), 209 to 260 (ASAG…RPTP), and 261 to 304 (SLPD…IGAV). The interval 5-304 (FLYTSKIAAI…SGKGWSIGAV (300 aa)) is 6 X approximate tandem repeats. The beta-L-fucose site is built by Arg25, Glu37, Arg78, Glu90, Trp98, Gln102, Arg132, Glu147, and Trp154. Residues Arg78 and Glu90 each coordinate alpha-L-fucose. Gln102 lines the alpha-L-fucose pocket. 3 residues coordinate alpha-L-fucose: Trp154, Arg180, and Glu192. Position 200 (Trp200) interacts with beta-L-fucose. An alpha-L-fucose-binding site is contributed by Gly204. 2 residues coordinate beta-L-fucose: Arg227 and Glu239. Trp246 provides a ligand contact to alpha-L-fucose. Trp299 lines the beta-L-fucose pocket.

It belongs to the fungal fucose-specific lectin family. Forms homodimers. The two AAL monomers are associated via interactions between N-terminal and C-terminal peptides. Tyr-7 interacts via aromatic ring stacking with its counterpart on the other monomer, whereas Ser-284 interacts via hydrogen bonding with Asp-264 on the other monomer.

Lectin that specifically binds to L-fucose. Has strongest preference for the alpha-1,6-fucosylated chain (core fucose) on glycoproteins among alpha-1,2-, alpha-1,3-, alpha-1,4-, and alpha-1,6-fucosylated chains. Might play a role in the differentiation of the fruiting body. Exhibits antifungal activity against Mucor racemosus and thus could act as an antifungal protein in natural ecosystems. This chain is Fucose-specific lectin, found in Aleuria aurantia (Orange peel mushroom).